The sequence spans 324 residues: Glycerol-3-phosphate dehydrogenase [NAD(P)+] (324 aa).

NADPH contacts are provided by Ser10, Phe11, Arg31, and Lys106. Sn-glycerol 3-phosphate is bound by residues Lys106, Gly134, and Ser136. Residue Ala138 coordinates NADPH. Sn-glycerol 3-phosphate contacts are provided by Lys189, Asp244, Ser254, Arg255, and Asn256. Catalysis depends on Lys189, which acts as the Proton acceptor. Arg255 serves as a coordination point for NADPH. The NADPH site is built by Ile279 and Glu281.

Belongs to the NAD-dependent glycerol-3-phosphate dehydrogenase family.

It localises to the cytoplasm. The enzyme catalyses sn-glycerol 3-phosphate + NAD(+) = dihydroxyacetone phosphate + NADH + H(+). It catalyses the reaction sn-glycerol 3-phosphate + NADP(+) = dihydroxyacetone phosphate + NADPH + H(+). Its pathway is membrane lipid metabolism; glycerophospholipid metabolism. In terms of biological role, catalyzes the reduction of the glycolytic intermediate dihydroxyacetone phosphate (DHAP) to sn-glycerol 3-phosphate (G3P), the key precursor for phospholipid synthesis. This chain is Glycerol-3-phosphate dehydrogenase [NAD(P)+], found in Ehrlichia canis (strain Jake).